The following is a 527-amino-acid chain: Peptide chain release factor 3 (527 aa).

The tr-type G domain occupies 9-277 (AKRRTFAIIS…AVVDWAPLPL (269 aa)). GTP contacts are provided by residues 18-25 (SHPDAGKT), 86-90 (DTPGH), and 140-143 (NKLD).

It belongs to the TRAFAC class translation factor GTPase superfamily. Classic translation factor GTPase family. PrfC subfamily.

It is found in the cytoplasm. Its function is as follows. Increases the formation of ribosomal termination complexes and stimulates activities of RF-1 and RF-2. It binds guanine nucleotides and has strong preference for UGA stop codons. It may interact directly with the ribosome. The stimulation of RF-1 and RF-2 is significantly reduced by GTP and GDP, but not by GMP. The protein is Peptide chain release factor 3 of Pseudomonas fluorescens (strain ATCC BAA-477 / NRRL B-23932 / Pf-5).